A 254-amino-acid chain; its full sequence is Very-long-chain (3R)-3-hydroxyacyl-CoA dehydratase 2 (254 aa).

Positions 1–10 (MAAAAATAAT) are enriched in low complexity. Residues 1-34 (MAAAAATAATKGNGGGSGRVGAGDSSGARKKKGP) are disordered. Alanine 2 is modified (N-acetylalanine). The Cytoplasmic portion of the chain corresponds to 2–41 (AAAAATAATKGNGGGSGRVGAGDSSGARKKKGPGPVATAY). Gly residues predominate over residues 12 to 21 (GNGGGSGRVG). The chain crosses the membrane as a helical span at residues 42 to 60 (LVIYNVVMTAGWLVIAVGL). Topologically, residues 61 to 79 (VRAYLAKGSYHSLYYSIER) are lumenal. Residues 80–97 (PLKFFQTGALLEILHCAI) form a helical membrane-spanning segment. Residues 98 to 107 (GIVPSSVVLT) are Cytoplasmic-facing. A helical membrane pass occupies residues 108–125 (SFQVMSRVFLIWAVTHSV). Over 126–130 (KEVQS) the chain is Lumenal. A helical transmembrane segment spans residues 131–146 (EDSVLLFVIAWTITEI). Topologically, residues 147-169 (IRYSFYTFSLLNHLPYIIKWARY) are cytoplasmic. The helical transmembrane segment at 170-187 (TLFIVLYPMGVTGELLTI) threads the bilayer. Residues tyrosine 176 and glutamate 183 contribute to the active site. Over 188 to 217 (YAALPFVRQAGLYSISLPNKYNFSFDYHAF) the chain is Lumenal. Positions 198–214 (GLYSISLPNKYNFSFDY) are may be involved in interaction with TECR. A glycan (N-linked (GlcNAc...) asparagine) is linked at asparagine 209. The chain crosses the membrane as a helical span at residues 218 to 235 (LILIMISYIPLFPQLYFH). Over 236–254 (MIHQRRKVLSHTEEHKKFE) the chain is Cytoplasmic.

The protein belongs to the very long-chain fatty acids dehydratase HACD family. May interact with enzymes of the ELO family (including ELOVL1); with those enzymes that mediate condensation, the first of the four steps of the reaction cycle responsible for fatty acids elongation, may be part of a larger fatty acids elongase complex. Interacts with BCAP31. Interacts with TECR.

It localises to the endoplasmic reticulum membrane. The catalysed reaction is a very-long-chain (3R)-3-hydroxyacyl-CoA = a very-long-chain (2E)-enoyl-CoA + H2O. It carries out the reaction (3R)-hydroxyhexadecanoyl-CoA = (2E)-hexadecenoyl-CoA + H2O. The enzyme catalyses (3R)-hydroxyoctadecanoyl-CoA = (2E)-octadecenoyl-CoA + H2O. It catalyses the reaction (3R)-hydroxyeicosanoyl-CoA = (2E)-eicosenoyl-CoA + H2O. The catalysed reaction is (3R)-hydroxydocosanoyl-CoA = (2E)-docosenoyl-CoA + H2O. It carries out the reaction (3R)-hydroxytetracosanoyl-CoA = (2E)-tetracosenoyl-CoA + H2O. The enzyme catalyses (3R)-hydroxyhexacosanoyl-CoA = (2E)-hexacosenoyl-CoA + H2O. The protein operates within lipid metabolism; fatty acid biosynthesis. In terms of biological role, catalyzes the third of the very long-chain fatty acids (VLCFA) elongation four-step cycle (condensation, reduction, dehydration, and reduction). This endoplasmic reticulum-elongation process is characterized by the addition of two carbons to the lipid chain through each cycle. This enzyme catalyzes the dehydration of the 3-hydroxyacyl-CoA intermediate into trans-2,3-enoyl-CoA, within each cycle of elongation. Therefore, it participates in the production of various VLCFAs involved in multiple biological processes as precursors of membrane lipids and lipid mediators. This is Very-long-chain (3R)-3-hydroxyacyl-CoA dehydratase 2 from Mus musculus (Mouse).